The following is a 257-amino-acid chain: Type I iodothyronine deiodinase (257 aa).

Residues 1–12 (MGLPGLGLLLKR) lie on the Extracellular side of the membrane. Residues 13–33 (FGVLVRVALKVAVGKVLLTLW) form a helical; Signal-anchor for type III membrane protein membrane-spanning segment. Topologically, residues 34-257 (PSAIRPHLLA…CRSSAQSPRL (224 aa)) are cytoplasmic. Selenocysteine 126 is an active-site residue. A non-standard amino acid (selenocysteine) is located at residue selenocysteine 126.

This sequence belongs to the iodothyronine deiodinase family. In terms of assembly, predominantly monomer. Can form homodimers but homodimerization is not essential for enzyme activity. In terms of tissue distribution, liver specific.

The protein resides in the cell membrane. It is found in the endoplasmic reticulum membrane. It localises to the basolateral cell membrane. It catalyses the reaction 3,3',5-triiodo-L-thyronine + iodide + A + H(+) = L-thyroxine + AH2. The enzyme catalyses 3,3',5'-triiodo-L-thyronine + iodide + A + H(+) = L-thyroxine + AH2. The catalysed reaction is 3,3'-diiodo-L-thyronine + iodide + A + H(+) = 3,3',5'-triiodo-L-thyronine + AH2. It carries out the reaction 3,3'-diiodo-L-thyronine + iodide + A + H(+) = 3,3',5-triiodo-L-thyronine + AH2. It catalyses the reaction 3'-iodo-L-thyronine + iodide + A + H(+) = 3',5'-diiodo-L-thyronine + AH2. The enzyme catalyses 3-iodo-L-thyronine + iodide + A + H(+) = 3,5-diiodo-L-thyronine + AH2. The catalysed reaction is 3-iodo-L-thyronine + iodide + A + H(+) = 3,3'-diiodo-L-thyronine + AH2. It carries out the reaction 3,3'-diiodothyronamine + iodide + A + H(+) = 3,3',5'-triiodothyronamine + AH2. It catalyses the reaction 3'-iodothyronamine + iodide + A + H(+) = 3',5'-diiodothyronamine + AH2. The enzyme catalyses 3-iodothyronamine + iodide + A + H(+) = 3,3'-diiodothyronamine + AH2. The catalysed reaction is 3,3'-diiodothyronamine + iodide + A + H(+) = 3,3',5-triiodothyronamine + AH2. It carries out the reaction 3-iodothyronamine + iodide + A + H(+) = 3,5-diiodothyronamine + AH2. It catalyses the reaction 3,3'-diiodo-L-thyronine sulfate + iodide + A + H(+) = 3,3',5'-triiodo-L-thyronine sulfate + AH2. The enzyme catalyses 3,3',5'-triiodo-L-thyronine sulfate + iodide + A + H(+) = L-thyroxine sulfate + AH2. The catalysed reaction is 3,3'-diiodo-L-thyronine sulfate + iodide + A + H(+) = 3,3',5-triiodo-L-thyronine sulfate + AH2. Plays a crucial role in the metabolism of thyroid hormones (TH) and has specific roles in TH activation and inactivation by deiodination. Catalyzes the deiodination of L-thyroxine (T4) to 3,5,3'-triiodothyronine (T3) and 3',5'-diiodothyronine (3',5'-T2) to 3'-monoiodothyronine (3'-T1) via outer-ring deiodination (ORD). Catalyzes the deiodination of T4 to 3,3',5'-triiodothyronine (rT3), T3 to 3,3'-diiodothyronine (3,3'-T2), 3,5-diiodothyronine (3,5-T2) to 3-monoiodothyronine (3-T1) and 3,3'-T2 to 3-T1 via inner-ring deiodination (IRD). Catalyzes the deiodination of rT3 to 3,3'-T2 via ORD. Catalyzes the phenolic ring deiodinations of 3,3',5'-triiodothyronamine, 3',5'-diiodothyronamine and 3,3'-diiodothyronamine as well as tyrosyl ring deiodinations of 3,5,3'-triiodothyronamine and 3,5-diiodothyronamine. Catalyzes the deiodination of L-thyroxine sulfate and 3,3',5-triiodo-L-thyronine sulfate via IRD and of 3,3',5'-triiodo-L-thyronine sulfate via ORD. In Suncus murinus (Asian house shrew), this protein is Type I iodothyronine deiodinase (DIO1).